Here is a 425-residue protein sequence, read N- to C-terminus: RNA-binding protein L (425 aa).

The span at 1-20 (MQQPPSQPQPGMGGPPPPPQ) shows a compositional bias: pro residues. The tract at residues 1-82 (MQQPPSQPQP…AAPPPQAMPA (82 aa)) is disordered. Low complexity predominate over residues 21-31 (GAAGQPPQWGA). A compositionally biased stretch (pro residues) spans 32 to 80 (IPPPMPPHQYGAPPPQQPPAMWGQPPPQAHYGQVPPPQPYYAAPPPQAM). RRM domains lie at 90–170 (KTLW…WASA), 180–259 (YTIF…PAAN), and 284–356 (TTIF…WGRS).

It belongs to the polyadenylate-binding RBP45 family. As to quaternary structure, interacts with RBP-P. Interacts with RAB5A.

It localises to the nucleus. Its subcellular location is the cytoplasm. RNA-binding protein that binds to a cis-localization element or zipcode, within the 5'-CDS of prolamine RNA. Binds strongly to glutelin and prolamin mRNAs, particularly to 3'-UTR and zipcode RNA. Recognizes and binds to glutelin zipcode RNA, which is required for proper mRNA localization to cisternal endoplasmic reticulum. Recognizes and binds to prolamin zipcode RNA, which is required for proper mRNA localization to the protein body endoplasmic reticulum that delimits the prolamine intracisternal inclusion granules. Required for the correct localization of glutelin and prolamine mRNA in endosperm cells during grain development. RBP-L and RBP-P form a quaternary complex with the membrane trafficking factors NSF and RAB5A. This quaternay complex carries glutelin mRNAs for active transport on endosomes to the cortical endoplasmic reticulum membrane, and enables endosome-mediated glutelin mRNA transport in endosperm cells. This chain is RNA-binding protein L, found in Oryza sativa subsp. japonica (Rice).